The sequence spans 364 residues: Aminomethyltransferase (364 aa).

This sequence belongs to the GcvT family. In terms of assembly, the glycine cleavage system is composed of four proteins: P, T, L and H.

The catalysed reaction is N(6)-[(R)-S(8)-aminomethyldihydrolipoyl]-L-lysyl-[protein] + (6S)-5,6,7,8-tetrahydrofolate = N(6)-[(R)-dihydrolipoyl]-L-lysyl-[protein] + (6R)-5,10-methylene-5,6,7,8-tetrahydrofolate + NH4(+). Functionally, the glycine cleavage system catalyzes the degradation of glycine. The polypeptide is Aminomethyltransferase (Escherichia coli O81 (strain ED1a)).